A 256-amino-acid chain; its full sequence is Neuroendocrine secretory protein 55 (256 aa).

Positions 1–46 are cleaved as a signal peptide; the sequence is MDRRSRAHQWRRARHNYNDLCPPIGRRAATALLWLSCSIALLRALA. The disordered stretch occupies residues 61-256; it reads SFLNAHHRSA…RKGPIPIRRH (196 aa). The segment covering 86-103 has biased composition (basic and acidic residues); the sequence is ESDHEHEEAEPELARPEC. Composition is skewed to acidic residues over residues 104–139 and 206–216; these read LEYDQDDYETETDSETEPESDIQSETEFETEPETEP and LDEDPRDPEES. Residues 225–236 show a composition bias toward basic residues; sequence QPRRCKTRRPAR.

The protein belongs to the NESP55 family. In terms of processing, binds keratan sulfate chains. Post-translationally, may be proteolytically processed to give rise to a number of active peptides.

It localises to the cytoplasmic vesicle. The protein resides in the secretory vesicle. It is found in the synaptic vesicle. The protein localises to the secreted. The protein is Neuroendocrine secretory protein 55 of Rattus norvegicus (Rat).